A 53-amino-acid polypeptide reads, in one-letter code: Temporin-SHd (53 aa).

The N-terminal stretch at 1-10 (FLGTINLSLC) is a signal peptide. Positions 11–34 (EQERDADEEKRDEPDESDVEVEKR) are excised as a propeptide. Phenylalanine 51 bears the Phenylalanine amide mark.

It is found in the secreted. Its subcellular location is the target cell membrane. Functionally, non-amphipathic mildly cationic alpha-helical antimicrobial peptide with potent activity against Gram-positive (including methicillin-resistant Staphylococcus aureus (MRSA)) and Gram-negative bacteria, and some fungi, as well as against Trypanosoma and Leishmania (both promastigote and amastigote forms). Strongly and selectively perturbs anionic bilayer membranes by interacting with the polar head groups and acyl region of the phospholipids, with formation of regions of two coexisting phases, one phase rich in peptide and the other lipid-rich. Shows low hemolytic activity (LC(50)=44 uM) and a low toxicity for human monocytes THP-1 and THP-1-derived macrophages. Is not toxic to human hepatoma-derived cells. This is Temporin-SHd from Pelophylax saharicus (Sahara frog).